Here is a 387-residue protein sequence, read N- to C-terminus: Alkanesulfonate monooxygenase (387 aa).

This sequence belongs to the SsuD family.

The enzyme catalyses an alkanesulfonate + FMNH2 + O2 = an aldehyde + FMN + sulfite + H2O + 2 H(+). Catalyzes the desulfonation of aliphatic sulfonates. This is Alkanesulfonate monooxygenase from Cupriavidus metallidurans (strain ATCC 43123 / DSM 2839 / NBRC 102507 / CH34) (Ralstonia metallidurans).